The sequence spans 271 residues: Putative hydro-lyase jk0403 (271 aa).

It belongs to the D-glutamate cyclase family.

This chain is Putative hydro-lyase jk0403, found in Corynebacterium jeikeium (strain K411).